Reading from the N-terminus, the 112-residue chain is Tyrosine-protein phosphatase 17 (112 aa).

A Tyrosine-protein phosphatase domain is found at 1-112 (WRMIWEHECC…QPHTAGPIVV (112 aa)). A substrate-binding site is contributed by Asp-82.

It belongs to the protein-tyrosine phosphatase family.

The enzyme catalyses O-phospho-L-tyrosyl-[protein] + H2O = L-tyrosyl-[protein] + phosphate. The sequence is that of Tyrosine-protein phosphatase 17 (STY-17) from Styela plicata (Wrinkled sea squirt).